We begin with the raw amino-acid sequence, 804 residues long: Ion-translocating oxidoreductase complex subunit C (804 aa).

4Fe-4S ferredoxin-type domains follow at residues 366–397 and 407–436; these read SEMGQNEAEQGCIRCSACADACPAALLPQQLY and KARAHNIADCIECGACAYVCPSNIPLVQYY. Residues Cys377, Cys380, Cys383, Cys387, Cys416, Cys419, Cys422, and Cys426 each contribute to the [4Fe-4S] cluster site. Disordered stretches follow at residues 466–532 and 567–804; these read RLER…EVRV and KAAQ…MQED. Low complexity-rich tracts occupy residues 484-495, 567-582, 592-619, 629-660, 668-693, 706-731, and 744-769; these read SVASSDAGAIAA, KAAQAAEASPTEAPQQ, AAVAAAVARTKAKKAAQAAEASPTEAPQ, KAAVAAAVARAKAKKAAQAAEASATEAPQQSA, and AAVAAAVARAKAKKAAQAAEASATEA.

It belongs to the 4Fe4S bacterial-type ferredoxin family. RnfC subfamily. In terms of assembly, the complex is composed of six subunits: RnfA, RnfB, RnfC, RnfD, RnfE and RnfG. The cofactor is [4Fe-4S] cluster.

The protein localises to the cell inner membrane. Its function is as follows. Part of a membrane-bound complex that couples electron transfer with translocation of ions across the membrane. The sequence is that of Ion-translocating oxidoreductase complex subunit C from Erwinia tasmaniensis (strain DSM 17950 / CFBP 7177 / CIP 109463 / NCPPB 4357 / Et1/99).